A 95-amino-acid polypeptide reads, in one-letter code: Small ribosomal subunit protein bS16 (95 aa).

It belongs to the bacterial ribosomal protein bS16 family.

The protein is Small ribosomal subunit protein bS16 of Thermosipho melanesiensis (strain DSM 12029 / CIP 104789 / BI429).